The sequence spans 168 residues: Cell division inhibitor SulA (168 aa).

The segment at 106–112 (ALLTGNY) is ftsZ binding. The lon protease binding stretch occupies residues 161–168 (KIHSYLYH).

The protein belongs to the SulA family. As to quaternary structure, interacts with FtsZ. In terms of processing, is rapidly cleaved and degraded by the Lon protease once DNA damage is repaired.

Its function is as follows. Component of the SOS system and an inhibitor of cell division. Accumulation of SulA causes rapid cessation of cell division and the appearance of long, non-septate filaments. In the presence of GTP, binds a polymerization-competent form of FtsZ in a 1:1 ratio, thus inhibiting FtsZ polymerization and therefore preventing it from participating in the assembly of the Z ring. This mechanism prevents the premature segregation of damaged DNA to daughter cells during cell division. The polypeptide is Cell division inhibitor SulA (Yersinia pseudotuberculosis serotype O:1b (strain IP 31758)).